The sequence spans 161 residues: UPF0225 protein HI_0277 (161 aa).

It belongs to the UPF0225 family.

The chain is UPF0225 protein HI_0277 from Haemophilus influenzae (strain ATCC 51907 / DSM 11121 / KW20 / Rd).